The sequence spans 564 residues: Probable metalloprotease ARX1 (564 aa).

Belongs to the peptidase M24 family. In terms of assembly, component of the nucleoplasmic and cytoplasmic pre-60S ribosomal particles.

It is found in the cytoplasm. It localises to the nucleus. Probable metalloprotease involved in proper assembly of pre-ribosomal particles during the biogenesis of the 60S ribosomal subunit. Accompanies the pre-60S particles to the cytoplasm. The polypeptide is Probable metalloprotease ARX1 (ARX1) (Debaryomyces hansenii (strain ATCC 36239 / CBS 767 / BCRC 21394 / JCM 1990 / NBRC 0083 / IGC 2968) (Yeast)).